The sequence spans 217 residues: Uracil-DNA glycosylase (217 aa).

Asp62 functions as the Proton acceptor in the catalytic mechanism.

It belongs to the uracil-DNA glycosylase (UDG) superfamily. UNG family.

The protein resides in the cytoplasm. The catalysed reaction is Hydrolyzes single-stranded DNA or mismatched double-stranded DNA and polynucleotides, releasing free uracil.. Functionally, excises uracil residues from the DNA which can arise as a result of misincorporation of dUMP residues by DNA polymerase or due to deamination of cytosine. The sequence is that of Uracil-DNA glycosylase from Streptococcus pneumoniae (strain Hungary19A-6).